The chain runs to 428 residues: Light-independent protochlorophyllide reductase subunit N (428 aa).

Cys-29, Cys-54, and Cys-115 together coordinate [4Fe-4S] cluster.

The protein belongs to the BchN/ChlN family. Protochlorophyllide reductase is composed of three subunits; BchL, BchN and BchB. Forms a heterotetramer of two BchB and two BchN subunits. [4Fe-4S] cluster serves as cofactor.

The catalysed reaction is chlorophyllide a + oxidized 2[4Fe-4S]-[ferredoxin] + 2 ADP + 2 phosphate = protochlorophyllide a + reduced 2[4Fe-4S]-[ferredoxin] + 2 ATP + 2 H2O. The protein operates within porphyrin-containing compound metabolism; bacteriochlorophyll biosynthesis (light-independent). Functionally, component of the dark-operative protochlorophyllide reductase (DPOR) that uses Mg-ATP and reduced ferredoxin to reduce ring D of protochlorophyllide (Pchlide) to form chlorophyllide a (Chlide). This reaction is light-independent. The NB-protein (BchN-BchB) is the catalytic component of the complex. The chain is Light-independent protochlorophyllide reductase subunit N from Cereibacter sphaeroides (strain ATCC 17023 / DSM 158 / JCM 6121 / CCUG 31486 / LMG 2827 / NBRC 12203 / NCIMB 8253 / ATH 2.4.1.) (Rhodobacter sphaeroides).